We begin with the raw amino-acid sequence, 178 residues long: ATP-dependent protease subunit HslV (178 aa).

Residue Thr7 is part of the active site. Positions 162, 165, and 168 each coordinate Na(+).

This sequence belongs to the peptidase T1B family. HslV subfamily. A double ring-shaped homohexamer of HslV is capped on each side by a ring-shaped HslU homohexamer. The assembly of the HslU/HslV complex is dependent on binding of ATP.

It localises to the cytoplasm. The enzyme catalyses ATP-dependent cleavage of peptide bonds with broad specificity.. Its activity is regulated as follows. Allosterically activated by HslU binding. Protease subunit of a proteasome-like degradation complex believed to be a general protein degrading machinery. The sequence is that of ATP-dependent protease subunit HslV from Burkholderia cenocepacia (strain ATCC BAA-245 / DSM 16553 / LMG 16656 / NCTC 13227 / J2315 / CF5610) (Burkholderia cepacia (strain J2315)).